Reading from the N-terminus, the 112-residue chain is Nitrogen regulatory protein P-II (112 aa).

S49 bears the Phosphoserine mark. Residue Y51 is modified to O-UMP-tyrosine.

The protein belongs to the P(II) protein family. Homotrimer. Phosphorylation dependent on the nitrogen source and spectral light quality.

Its function is as follows. P-II indirectly controls the transcription of the GS gene (glnA). P-II prevents NR-II-catalyzed conversion of NR-I to NR-I-phosphate, the transcriptional activator of glnA. When P-II is phosphorylated, these events are reversed. In nitrogen-limiting conditions, when the ratio of Gln to 2-ketoglutarate decreases, P-II is phosphorylated which allows the deadenylation of glutamine synthetase (GS), thus activating the enzyme. This chain is Nitrogen regulatory protein P-II (glnB), found in Synechococcus elongatus (strain ATCC 33912 / PCC 7942 / FACHB-805) (Anacystis nidulans R2).